We begin with the raw amino-acid sequence, 266 residues long: Inositol-1-monophosphatase (266 aa).

The Mg(2+) site is built by Glu69, Asp86, Leu88, and Asp89. Residue Glu69 participates in substrate binding. Substrate is bound by residues 88-91 (LDGT), Arg185, and Asp214. Asp214 contacts Mg(2+).

Belongs to the inositol monophosphatase superfamily. Mg(2+) is required as a cofactor.

It carries out the reaction a myo-inositol phosphate + H2O = myo-inositol + phosphate. The chain is Inositol-1-monophosphatase (suhB) from Rhizobium meliloti (strain 1021) (Ensifer meliloti).